We begin with the raw amino-acid sequence, 399 residues long: Na(+)/H(+) antiporter NhaA (399 aa).

11 consecutive transmembrane segments (helical) span residues 14 to 34, 59 to 79, 95 to 115, 124 to 144, 154 to 174, 177 to 197, 213 to 233, 261 to 281, 290 to 310, 331 to 351, and 363 to 383; these read AGGILLMIAVALAMIMANSPL, LIHWINDGLMALFFMLIGLEV, SLPTFAAVGGMVFPAGIYLLF, AGWAIPAATDIAFALGVMALL, VFLLALAIIDDLGVVVIIAMF, TDLSMLSLIVAGIAILGLVGL, LILWIAVLKSGVHATLAGVII, FIILPIFAFANAGVDLSPMSF, VGIALGLLLGKPLGVLVFSYI, VALMCGIGFTMSMFISSLAFV, and LGILVGSFASAIIGYFWLAKV.

Belongs to the NhaA Na(+)/H(+) (TC 2.A.33) antiporter family.

It localises to the cell inner membrane. The catalysed reaction is Na(+)(in) + 2 H(+)(out) = Na(+)(out) + 2 H(+)(in). Functionally, na(+)/H(+) antiporter that extrudes sodium in exchange for external protons. This is Na(+)/H(+) antiporter NhaA from Shewanella sediminis (strain HAW-EB3).